The primary structure comprises 321 residues: Protein stand still (321 aa).

2 coiled-coil regions span residues 74–103 (KLHE…RKKA) and 147–167 (KQEQ…KANL). Residues 146–162 (HKQEQEGATRKLEDSTS) show a composition bias toward basic and acidic residues. 2 disordered regions span residues 146 to 166 (HKQE…DKAN) and 227 to 248 (QVPP…MEDV). The span at 235 to 244 (SKSSGSLASS) shows a compositional bias: low complexity. Residues 272–292 (QRDVLQRLERSMAQISQELHC) adopt a coiled-coil conformation.

As to expression, germ cells specific. Expressed in all germ cells. During the first instar larvae, it is expressed in all germ cells of both sexes. In third instar larvae, it decreases in male germ cells while it remains in female germ cells. In adult ovary, it is expressed in cells of the germarium, including the stem cells. In the early previtellogenic stages, it is highly expressed in the nurse cells. During vitellogenesis, it is not translocated into the maturing egg. In testes, it is only expressed during some steps of male germline differentiation. At the apex testis, it is expressed at low level in stem cells and dividing spermatogonia, while in newly formed 16-cell cysts of primary spermatocytes, it is transiently but strongly expressed before vanishing during spermatocyte growth phase.

It is found in the nucleus. Essential in the female germline for proper survival, sex determination and differentiation. Participates in the transcriptional activation of Otu. Does not regulate the expression of Ovo. This chain is Protein stand still (stil), found in Drosophila melanogaster (Fruit fly).